Here is a 1029-residue protein sequence, read N- to C-terminus: Chitin synthase 2 (1029 aa).

Disordered regions lie at residues 1-160 (MDRP…GARS), 174-216 (SDVD…SHLR), and 234-257 (AHYG…QKSR). Residues 61–77 (PSVSSIHSRPSSISNIP) are compositionally biased toward low complexity. Residues 244–257 (DQQRRGVREPQKSR) are compositionally biased toward basic and acidic residues. Asn-348 carries an N-linked (GlcNAc...) asparagine glycan. 8 helical membrane passes run 639–659 (WLNG…QLWA), 681–701 (VLFT…VAGG), 716–736 (LYIF…QFIL), 752–772 (SMVI…YIVI), 791–811 (NLIV…FIYL), 820–840 (SIQY…YAFC), 918–938 (YMVV…SEIY), and 952–972 (ILWS…TFAI).

Belongs to the chitin synthase family. Class II subfamily.

It is found in the cell membrane. The enzyme catalyses [(1-&gt;4)-N-acetyl-beta-D-glucosaminyl](n) + UDP-N-acetyl-alpha-D-glucosamine = [(1-&gt;4)-N-acetyl-beta-D-glucosaminyl](n+1) + UDP + H(+). Polymerizes chitin, a structural polymer of the cell wall and septum, by transferring the sugar moiety of UDP-GlcNAc to the non-reducing end of the growing chitin polymer. Plays an important role in cell wall integrity and has distinct functions in invasive hyphae and vegetative hyphae, but is not involved in plant infection. This chain is Chitin synthase 2, found in Pyricularia oryzae (strain 70-15 / ATCC MYA-4617 / FGSC 8958) (Rice blast fungus).